A 313-amino-acid chain; its full sequence is LOB domain-containing protein 36 (313 aa).

The 102-residue stretch at 6-107 (SPCAACKFLR…HDLENAKKEL (102 aa)) folds into the LOB domain. Residues 245–313 (GNFVDSPSTN…SEEGRRNVIG (69 aa)) form a disordered region. Residues 249 to 260 (DSPSTNNNYHTD) are compositionally biased toward polar residues. Over residues 280–302 (PSQSSQPLPLQTQETQTQTQPNS) the composition is skewed to low complexity.

The protein belongs to the LOB domain-containing protein family. In terms of tissue distribution, expressed in trichomes, at the base of many lateral organs, including branching points of the inflorescence and floral organs and in the distal part of the pistil at stages when style and stigma start to develop. Also detected in pedicels and at the base of petals and sepals.

Controls the proximal-distal patterning in petals and the adaxial-abaxial determination of leaves. Involved in the repression of the homeobox gene BP. This chain is LOB domain-containing protein 36 (LBD36), found in Arabidopsis thaliana (Mouse-ear cress).